Here is a 102-residue protein sequence, read N- to C-terminus: Small ribosomal subunit protein uS10 (102 aa).

Belongs to the universal ribosomal protein uS10 family. Part of the 30S ribosomal subunit.

Functionally, involved in the binding of tRNA to the ribosomes. The chain is Small ribosomal subunit protein uS10 from Salinispora tropica (strain ATCC BAA-916 / DSM 44818 / JCM 13857 / NBRC 105044 / CNB-440).